The chain runs to 85 residues: UPF0335 protein BH15140 (85 aa).

Belongs to the UPF0335 family.

The polypeptide is UPF0335 protein BH15140 (Bartonella henselae (strain ATCC 49882 / DSM 28221 / CCUG 30454 / Houston 1) (Rochalimaea henselae)).